A 141-amino-acid polypeptide reads, in one-letter code: Acetyltransferase ECA0875 (141 aa).

In terms of domain architecture, N-acetyltransferase spans Met-1 to Tyr-141.

Belongs to the acetyltransferase family. YpeA subfamily.

The chain is Acetyltransferase ECA0875 from Pectobacterium atrosepticum (strain SCRI 1043 / ATCC BAA-672) (Erwinia carotovora subsp. atroseptica).